A 133-amino-acid chain; its full sequence is Small ribosomal subunit protein uS9 (133 aa).

The interval 97 to 133 (MKQELKSQGFLTRDPRKKERKKYGRKKARKSFQFSKR) is disordered. Residues 114-133 (KERKKYGRKKARKSFQFSKR) show a composition bias toward basic residues.

It belongs to the universal ribosomal protein uS9 family.

The polypeptide is Small ribosomal subunit protein uS9 (rpsI) (Chlamydia muridarum (strain MoPn / Nigg)).